A 628-amino-acid polypeptide reads, in one-letter code: MHSRSSDPPTGSKLAALTLGAVGVVYGDIGTSPLYALKEVFAHGRIDITPDNIYGILSLVVWTLTVIVSLKYVLLILRADNNGEGGLIAMLALASTAVKERPVLRRRLLILGVFGTAIFFGDGVITPAISVLSAVEGLEVAAPGLHRYVVPVTLVVLTLLFAAQRFGTGGIGKFFGPVTAVWFIVLALLGVVHIVENPAVLAALSPHYALAFMWQHPGTAFVSLGAVVLCVTGAEALYADMGHFGKRPIRLAWFSLVMPALMINYFGQGAMLLQRPETVKNPFYEMAPEWALYPLIVLATLATVIASQALITAAFSVTKQAIQLGYFPRLRVTHTSVKETGQIYVPFVNWGLYACIVLAVVTFGSSSKLASAYGIAVTTDMLITTTMTFFVIRYSWKYPWALCVAATGFFFLVDAMFFAANAIKILDGGWFPLAIGAAMFTLMMTWKQGRRLMSERLREEAIDLKSFLESVFISPPTRVQGTAVFLAAEQGSTPNALLHNLKHNKVLHEQNLFVTVRHHEVPWIPFSKRCEIESLGHCCWQVTLNFGFKNEPDVPEALALLRGRGVQLDDMETSYFLSRDIVIPTIGKGMAIWREKLFCSMHRNAAAAADFLNLPTNRVVELGSKVEI.

The next 11 helical transmembrane spans lie at 56-76 (ILSLVVWTLTVIVSLKYVLLI), 109-129 (LILGVFGTAIFFGDGVITPAI), 141-161 (AAPGLHRYVVPVTLVVLTLLF), 174-194 (FFGPVTAVWFIVLALLGVVHI), 209-229 (ALAFMWQHPGTAFVSLGAVVL), 253-273 (WFSLVMPALMINYFGQGAMLL), 295-315 (LIVLATLATVIASQALITAAF), 343-363 (IYVPFVNWGLYACIVLAVVTF), 372-392 (AYGIAVTTDMLITTTMTFFVI), 400-420 (WALCVAATGFFFLVDAMFFAA), and 425-445 (ILDGGWFPLAIGAAMFTLMMT).

It belongs to the HAK/KUP transporter (TC 2.A.72) family.

It is found in the cell inner membrane. The catalysed reaction is K(+)(in) + H(+)(in) = K(+)(out) + H(+)(out). Transport of potassium into the cell. Likely operates as a K(+):H(+) symporter. This Methylibium petroleiphilum (strain ATCC BAA-1232 / LMG 22953 / PM1) protein is Probable potassium transport system protein Kup.